Consider the following 418-residue polypeptide: MNTSAEDVRASAVRARQAAGQLAPLSRAAKDAALLGMAAALLDRSAEILAANALDTAAARAAGTSAALVDRLTLTPERIEAMADGLRQVAALEDPVGEVVRGRVLPNGLELRQVRVPLGVIGIIYEARPNVTVDAAGLCIKSGNAVLLRGSASALNSNRVLVDVLREAAVAAGLPADGVQLVPGADHDSVKHLMRLRGLVDVLIPRGGAGLIRAVVEESTVPVIETGVGNCHVYVDVDADVDTALAITLNAKTQKVSVCNSAETLLVHAGIAAEFLPRVLTALRDAGVTVHGDETVRAVDPSAVPVTDEDWATEYLSLDMAVGVVDSLDQALDHIRRWSSGHTEAIVTRSLAASRRFVASCDSAAVMVNASTRFTDGERFGMGAEIGISTQKLHARGPMGLPELTSTTWVGIGDGHLV.

Belongs to the gamma-glutamyl phosphate reductase family.

It localises to the cytoplasm. The catalysed reaction is L-glutamate 5-semialdehyde + phosphate + NADP(+) = L-glutamyl 5-phosphate + NADPH + H(+). Its pathway is amino-acid biosynthesis; L-proline biosynthesis; L-glutamate 5-semialdehyde from L-glutamate: step 2/2. Catalyzes the NADPH-dependent reduction of L-glutamate 5-phosphate into L-glutamate 5-semialdehyde and phosphate. The product spontaneously undergoes cyclization to form 1-pyrroline-5-carboxylate. In Parafrankia sp. (strain EAN1pec), this protein is Gamma-glutamyl phosphate reductase.